The sequence spans 498 residues: Cytochrome P450 monooxygenase astB (498 aa).

A helical transmembrane segment spans residues 7 to 27; sequence FTTMPVVLLVGLVLYQLLAFT. N-linked (GlcNAc...) asparagine glycosylation is found at N237, N248, and N346. Residue C425 coordinates heme.

The protein belongs to the cytochrome P450 family. The cofactor is heme.

The protein localises to the membrane. The catalysed reaction is preasperterpenoid A + 4 reduced [NADPH--hemoprotein reductase] + 4 O2 = asperterpenoid A + 4 oxidized [NADPH--hemoprotein reductase] + 5 H2O + 5 H(+). The enzyme catalyses asperterpenoid A + 2 reduced [NADPH--hemoprotein reductase] + 2 O2 = asperterpenoid B + 2 oxidized [NADPH--hemoprotein reductase] + 3 H2O + 3 H(+). The protein operates within secondary metabolite biosynthesis; terpenoid biosynthesis. Functionally, cytochrome P450 monooxygenase; part of the gene cluster that mediates the biosynthesis of the asperterpenoids, sesterterpenes that exhibit anti-tuberculosis activity. The first step of the pathway is performed by the sesterterpene synthase astC that possesses both prenyl transferase and terpene cyclase activity, converting isopentenyl diphosphate and dimethylallyl diphosphate into geranylfarnesyl diphosphate (GFPP) and further converting GFPP into preasperterpenoid A, respectively. The cytochrome P450 monooxygenase astB then dually oxidizes preasperterpenoid A to produce asperterpenoid A along with a minor product, asperterpenoid B. Finally, the cytochrome P450 monooxygenase astA converts asperterpenoid A into asperterpenoid C. The protein is Cytochrome P450 monooxygenase astB of Talaromyces wortmannii (Penicillium wortmannii).